The following is an 845-amino-acid chain: Prickle-like protein 2 (845 aa).

Residues phenylalanine 18 to threonine 126 form the PET domain. Position 92 is a phosphoserine (serine 92). LIM zinc-binding domains lie at alanine 128–proline 193, proline 193–glutamate 253, and glutamate 253–asparagine 317. Disordered stretches follow at residues glutamate 314–lysine 346 and tyrosine 483–glutamate 546. Residues glycine 318–glutamine 327 show a composition bias toward polar residues. Phosphoserine is present on residues serine 319, serine 321, and serine 322. Phosphothreonine occurs at positions 535, 537, and 540. Serine 544 and serine 547 each carry phosphoserine. The interval alanine 558–glycine 581 is disordered. Phosphoserine is present on residues serine 608 and serine 643. The interval glutamine 642–leucine 700 is disordered. A compositionally biased stretch (basic residues) spans phenylalanine 683–arginine 693. Serine 732 carries the post-translational modification Phosphoserine. The segment at serine 823–serine 845 is disordered. A Cysteine methyl ester modification is found at cysteine 842. The S-farnesyl cysteine moiety is linked to residue cysteine 842. The propeptide at isoleucine 843–serine 845 is removed in mature form.

Belongs to the prickle / espinas / testin family. As to expression, expressed in the hippocampus and cerebral cortex.

The protein localises to the nucleus membrane. This Mus musculus (Mouse) protein is Prickle-like protein 2 (Prickle2).